Consider the following 200-residue polypeptide: Glycerol-3-phosphate acyltransferase (200 aa).

5 helical membrane-spanning segments follow: residues 2-22 (FNIP…AVIV), 51-71 (KAAV…VLLA), 84-104 (AIAA…FFGF), 114-134 (LGVL…IWLV), and 159-179 (FFMP…LVLF).

The protein belongs to the PlsY family. In terms of assembly, probably interacts with PlsX.

The protein localises to the cell inner membrane. It catalyses the reaction an acyl phosphate + sn-glycerol 3-phosphate = a 1-acyl-sn-glycero-3-phosphate + phosphate. Its pathway is lipid metabolism; phospholipid metabolism. Its function is as follows. Catalyzes the transfer of an acyl group from acyl-phosphate (acyl-PO(4)) to glycerol-3-phosphate (G3P) to form lysophosphatidic acid (LPA). This enzyme utilizes acyl-phosphate as fatty acyl donor, but not acyl-CoA or acyl-ACP. In Neisseria meningitidis serogroup C / serotype 2a (strain ATCC 700532 / DSM 15464 / FAM18), this protein is Glycerol-3-phosphate acyltransferase.